An 84-amino-acid chain; its full sequence is Small ribosomal subunit protein uS17 (84 aa).

It belongs to the universal ribosomal protein uS17 family. In terms of assembly, part of the 30S ribosomal subunit.

Functionally, one of the primary rRNA binding proteins, it binds specifically to the 5'-end of 16S ribosomal RNA. The protein is Small ribosomal subunit protein uS17 of Vibrio atlanticus (strain LGP32) (Vibrio splendidus (strain Mel32)).